The chain runs to 2373 residues: Highly reducing polyketide synthase (2373 aa).

Residues 19–446 (QEPIAVVGIA…GSNAHVIVEE (428 aa)) form the Ketosynthase family 3 (KS3) domain. Catalysis depends on for beta-ketoacyl synthase activity residues C192, H329, and H369. A malonyl-CoA:ACP transacylase (MAT) domain region spans residues 560-874 (IFTGQGAQWP…QYTSAMARGA (315 aa)). Catalysis depends on S652, which acts as the For malonyltransferase activity. An N-terminal hotdog fold region spans residues 942–1078 (HDLLGSKVLG…GLIRIDEDVP (137 aa)). The dehydratase (DH) domain stretch occupies residues 942 to 1241 (HDLLGSKVLG…LSGLRYTRID (300 aa)). A PKS/mFAS DH domain is found at 942–1246 (HDLLGSKVLG…YTRIDTGPSV (305 aa)). The active-site Proton acceptor; for dehydratase activity is the H974. Residues 1090 to 1246 (SHQVDASLWH…YTRIDTGPSV (157 aa)) form a C-terminal hotdog fold region. The active-site Proton donor; for dehydratase activity is D1154. The tract at residues 1669 to 1985 (GTTDSLIYSE…SANHIGKIVI (317 aa)) is enoyl reductase (ER) domain. The tract at residues 2010–2187 (GYLLIGGLKG…NSVDLGAIQD (178 aa)) is ketoreductase (KR) domain. In terms of domain architecture, Carrier spans 2294–2370 (AIHDAVIDVT…QLAQKIVARL (77 aa)). S2330 carries the O-(pantetheine 4'-phosphoryl)serine modification.

Pantetheine 4'-phosphate serves as cofactor.

The protein operates within mycotoxin biosynthesis. In terms of biological role, highly reducing polyketide synthase; part of the gene cluster that mediates the biosynthesis of brefeldin A (BFA), a protein transport inhibitor that shows antiviral, antifungal, and antitumor properties. The proposed biosynthesis of BFA involves formation of an acyclic polyketide chain that is differentially tailored throughout the backbone. The highly reducing polyketide synthase Bref-PKS is proposed to synthesize the precisely reduced octaketide precursor, which could then be directly offloaded by the thiohydrolase enzyme Bref-TH followed by a cytochrome P450 monooxygenase-mediated formation of the cyclopentane ring and macrocyclization to afford 7-deoxy BFA. Alternatively, the first ring annulation can also occur on the ACP-tethered intermediate before the thiohydrolase release and lactonization. The C7-hydroxylation by another cytochrome P450 monooxygenase is believed to be the final step in the process to obtain the final structure of BFA. In addition to the HRPKS Bref-PKS and the thiohydrolase Bref-TH, the brefeldin A biosynthesis cluster contains 4 cytochrome p450 monooxygenases (called orf3 to orf6), as well a the probable cluster-specific transcription regulator orf8. This Eupenicillium brefeldianum (Penicillium brefeldianum) protein is Highly reducing polyketide synthase.